The primary structure comprises 49 residues: Agglutinin-1 (49 aa).

In terms of assembly, homooligomer. Post-translationally, glycosylated.

Its function is as follows. Beta-galactoside specific lectin. Has a hemagglutinating activity on erythrocytes. This is Agglutinin-1 from Pomacea flagellata (Apple snail).